The following is a 114-amino-acid chain: uncharacterized protein (114 aa).

Helical transmembrane passes span 58 to 78 and 94 to 114; these read CLLGVGAVGTFISTFPQFFLL and SISYAASAIFSFSIFFFFCLA.

Its subcellular location is the membrane. This is an uncharacterized protein from Saccharomyces cerevisiae (strain ATCC 204508 / S288c) (Baker's yeast).